Reading from the N-terminus, the 482-residue chain is UDP-glycosyltransferase 86A2 (482 aa).

UDP-alpha-D-glucose-binding positions include Ser297, 355–357 (CCQ), 372–380 (HCGWNSILE), and 394–397 (LTDQ).

Belongs to the UDP-glycosyltransferase family.

The chain is UDP-glycosyltransferase 86A2 (UGT86A2) from Arabidopsis thaliana (Mouse-ear cress).